Consider the following 241-residue polypeptide: DNA repair protein RecO (241 aa).

The protein belongs to the RecO family.

Its function is as follows. Involved in DNA repair and RecF pathway recombination. This Ruegeria sp. (strain TM1040) (Silicibacter sp.) protein is DNA repair protein RecO.